A 1529-amino-acid chain; its full sequence is Slit homolog 2 protein (1529 aa).

Residues 1-30 (MRGVGWQMLSLSLGLVLAILNKVAPQACPA) form the signal peptide. The LRRNT domain maps to 31 to 55 (QCSCSGSTVDCHGLALRSVPRNIPR). 6 LRR repeats span residues 56–77 (NTER…DFAG), 80–101 (HLRV…AFQD), 104–125 (ELER…LFLG), 128–149 (KLYR…AFRG), 152–173 (DIKN…AFRA), and 176–197 (DLEV…SFNH). N-linked (GlcNAc...) asparagine glycosylation occurs at N66. An N-linked (GlcNAc...) asparagine glycan is attached at N186. Residues 209–259 (NNLYCDCHLAWLSDWLRQRPRVGLYTQCMGPSHLRGHNVAEVQKREFVCSG) enclose the LRRCT 1 domain. The 37-residue stretch at 264 to 300 (MAPSCSVLHCPAACTCSNNIVDCRGKGLTEIPTNLPE) folds into the LRRNT 2 domain. Cysteines 277 and 286 form a disulfide. LRR repeat units lie at residues 301–322 (TITE…AFSP), 325–346 (KLRR…AFQG), 349–370 (SLNS…LFEG), 373–394 (SLQL…AFQD), and 397–418 (NLNL…TFSP). An LRRCT 2 domain is found at 430 to 480 (NPFICDCHLKWLADYLHTNPIETSGARCTSPRRLANKRIGQIKSKKFRCSA). Cystine bridges form between C434–C457, C436–C478, C506–C512, and C510–C519. Residues 497–533 (SGDCFADLACPEKCRCEGTTVDCSNQKLNKIPEHIPQ) enclose the LRRNT 3 domain. LRR repeat units follow at residues 534-555 (YTAE…GIFK), 559-580 (QLRK…AFEG), 583-604 (GVNE…MFKG), 607-628 (SLKT…SFIG), and 631-652 (SVRL…AFDT). An N-linked (GlcNAc...) asparagine glycan is attached at N564. N623 is a glycosylation site (N-linked (GlcNAc...) asparagine). In terms of domain architecture, LRRCT 3 spans 664-714 (NPFNCNCYLAWLGEWLRKKRIVTGNPRCQKPYFLKEIPIQDVAIQDFTCDD). 4 disulfides stabilise this stretch: C668-C691, C670-C712, C727-C733, and C731-C740. The LRRNT 4 domain maps to 718–754 (DNSCSPLSRCPTECTCLDTVVRCSNKGLKVLPKGIPR). LRR repeat units lie at residues 755-777 (DVTE…SNYK), 778-799 (HLTL…SFSN), 802-823 (QLLT…TFDG), and 826-847 (SLRL…AFND). N-linked (GlcNAc...) asparagine glycosylation is found at N794 and N799. The LRRCT 4 domain maps to 859 to 909 (NPLYCDCNMQWLSDWVKSEYKEPGIARCAGPGEMADKLLLTTPSKKFTCQG). Intrachain disulfides connect C863–C886, C865–C907, C922–C933, C927–C943, C945–C954, C961–C972, C966–C984, C986–C995, C1002–C1013, C1007–C1022, C1024–C1033, C1040–C1053, C1047–C1062, C1064–C1073, C1080–C1091, C1085–C1100, C1102–C1111, C1125–C1136, C1130–C1145, and C1147–C1156. 2 consecutive EGF-like domains span residues 918-955 (KCNP…QDCD) and 957-996 (PIHA…ENCE). Residues 998-1034 (NVDDCEDNDCENNSTCVDGINNYTCLCPPEYTGELCE) form the EGF-like 3; calcium-binding domain. N-linked (GlcNAc...) asparagine glycans are attached at residues N1009, N1010, and N1019. In terms of domain architecture, EGF-like 4 spans 1036–1074 (KLDFCAQDLNPCQHDSKCILTPKGFKCDCTPGYVGEHCD). The EGF-like 5; calcium-binding domain maps to 1076 to 1112 (DFDDCQDNKCKNGAHCTDAVNGYTCICPEGYSGLFCE). The region spanning 1121–1157 (RTSPCDNFDCQNGAQCIVRINEPICQCLPGYQGEKCE) is the EGF-like 6 domain. A Laminin G-like domain is found at 1160–1333 (VSVNFINKES…PMQTGILPGC (174 aa)). N-linked (GlcNAc...) asparagine glycans are attached at residues N1183, N1266, and N1300. 14 disulfide bridges follow: C1307/C1333, C1336/C1346, C1341/C1356, C1358/C1367, C1375/C1385, C1380/C1395, C1397/C1406, C1416/C1426, C1421/C1436, C1438/C1447, C1453/C1492, C1471/C1506, C1482/C1522, and C1486/C1524. One can recognise an EGF-like 7 domain in the interval 1332–1368 (GCEPCHKKVCAHGTCQPSSQAGFTCECQEGWMGPLCD). The region spanning 1453–1528 (CRGERIRDYY…VVKCGCTRCV (76 aa)) is the CTCK domain.

As to quaternary structure, interacts with GREM1. Homodimer. Binds ROBO1 and ROBO2 with high affinity. In terms of tissue distribution, fetal lung and kidney, and adult spinal cord. Weak expression in adult adrenal gland, thyroid, trachea and other tissues examined.

It is found in the secreted. Its function is as follows. Thought to act as molecular guidance cue in cellular migration, and function appears to be mediated by interaction with roundabout homolog receptors. During neural development involved in axonal navigation at the ventral midline of the neural tube and projection of axons to different regions. SLIT1 and SLIT2 seem to be essential for midline guidance in the forebrain by acting as repulsive signal preventing inappropriate midline crossing by axons projecting from the olfactory bulb. In spinal cord development may play a role in guiding commissural axons once they reached the floor plate by modulating the response to netrin. In vitro, silences the attractive effect of NTN1 but not its growth-stimulatory effect and silencing requires the formation of a ROBO1-DCC complex. May be implicated in spinal cord midline post-crossing axon repulsion. In vitro, only commissural axons that crossed the midline responded to SLIT2. In the developing visual system appears to function as repellent for retinal ganglion axons by providing a repulsion that directs these axons along their appropriate paths prior to, and after passage through, the optic chiasm. In vitro, collapses and repels retinal ganglion cell growth cones. Seems to play a role in branching and arborization of CNS sensory axons, and in neuronal cell migration. In vitro, Slit homolog 2 protein N-product, but not Slit homolog 2 protein C-product, repels olfactory bulb (OB) but not dorsal root ganglia (DRG) axons, induces OB growth cones collapse and induces branching of DRG axons. Seems to be involved in regulating leukocyte migration. This is Slit homolog 2 protein (SLIT2) from Homo sapiens (Human).